Consider the following 132-residue polypeptide: ATP synthase epsilon chain (132 aa).

The protein belongs to the ATPase epsilon chain family. In terms of assembly, F-type ATPases have 2 components, CF(1) - the catalytic core - and CF(0) - the membrane proton channel. CF(1) has five subunits: alpha(3), beta(3), gamma(1), delta(1), epsilon(1). CF(0) has three main subunits: a, b and c.

It localises to the cell inner membrane. Produces ATP from ADP in the presence of a proton gradient across the membrane. The polypeptide is ATP synthase epsilon chain (Anaeromyxobacter sp. (strain Fw109-5)).